The following is a 172-amino-acid chain: 3-hydroxydecanoyl-[acyl-carrier-protein] dehydratase (172 aa).

Histidine 71 is an active-site residue.

The protein belongs to the thioester dehydratase family. FabA subfamily. As to quaternary structure, homodimer.

The protein resides in the cytoplasm. It catalyses the reaction a (3R)-hydroxyacyl-[ACP] = a (2E)-enoyl-[ACP] + H2O. The catalysed reaction is (3R)-hydroxydecanoyl-[ACP] = (2E)-decenoyl-[ACP] + H2O. It carries out the reaction (2E)-decenoyl-[ACP] = (3Z)-decenoyl-[ACP]. It functions in the pathway lipid metabolism; fatty acid biosynthesis. Functionally, necessary for the introduction of cis unsaturation into fatty acids. Catalyzes the dehydration of (3R)-3-hydroxydecanoyl-ACP to E-(2)-decenoyl-ACP and then its isomerization to Z-(3)-decenoyl-ACP. Can catalyze the dehydratase reaction for beta-hydroxyacyl-ACPs with saturated chain lengths up to 16:0, being most active on intermediate chain length. The protein is 3-hydroxydecanoyl-[acyl-carrier-protein] dehydratase of Brucella anthropi (strain ATCC 49188 / DSM 6882 / CCUG 24695 / JCM 21032 / LMG 3331 / NBRC 15819 / NCTC 12168 / Alc 37) (Ochrobactrum anthropi).